Reading from the N-terminus, the 163-residue chain is MPSFDIVSEITLHEVRNAVENANRVLSTRYDFRGVEAVIELNEKNETIKITTESDFQLEQLIEILIGSCIKRGIEHSSLDIPAESEHHGKLYSKEIKLKQGIETEMAKKITKLVKDSKIKVQTQIQGEQVRVTGKSRDDLQAVIQLVKSAELGQPFQFNNFRD.

The protein belongs to the YajQ family.

Nucleotide-binding protein. The chain is Nucleotide-binding protein NTHI1194 from Haemophilus influenzae (strain 86-028NP).